The following is a 216-amino-acid chain: MOB kinase activator 1B (216 aa).

At Ser-2 the chain carries N-acetylserine. Phosphothreonine; by STK4/MST1 occurs at positions 12 and 35. Zn(2+) contacts are provided by Cys-79, Cys-84, His-161, and His-166.

This sequence belongs to the MOB1/phocein family. Binds STK38L. Interacts with LATS1 and LATS2. Post-translationally, phosphorylated by STK3/MST2 and STK4/MST1 and this phosphorylation enhances its binding to LATS1. Adrenal gland, bone marrow, brain, lung, placenta, prostate, salivary gland, skeletal muscle, testis, thymus, thyroid gland, uterus, colon with mucosa, fetal brain and fetal liver.

The protein localises to the cytoplasm. It localises to the nucleus. Its function is as follows. Activator of LATS1/2 in the Hippo signaling pathway which plays a pivotal role in organ size control and tumor suppression by restricting proliferation and promoting apoptosis. The core of this pathway is composed of a kinase cascade wherein STK3/MST2 and STK4/MST1, in complex with its regulatory protein SAV1, phosphorylates and activates LATS1/2 in complex with its regulatory protein MOB1, which in turn phosphorylates and inactivates YAP1 oncoprotein and WWTR1/TAZ. Phosphorylation of YAP1 by LATS1/2 inhibits its translocation into the nucleus to regulate cellular genes important for cell proliferation, cell death, and cell migration. Stimulates the kinase activity of STK38L. This Homo sapiens (Human) protein is MOB kinase activator 1B.